A 204-amino-acid chain; its full sequence is uncharacterized protein (204 aa).

Histidine 9 acts as the Tele-phosphohistidine intermediate in catalysis. Glutamate 86 functions as the Proton donor/acceptor in the catalytic mechanism.

Belongs to the phosphoglycerate mutase family.

This is an uncharacterized protein from Acanthamoeba polyphaga (Amoeba).